A 20-amino-acid chain; its full sequence is Large ribosomal subunit protein uL5 (20 aa).

The protein belongs to the universal ribosomal protein uL5 family. In terms of assembly, part of the 50S ribosomal subunit; part of the 5S rRNA/L5/L18/L25 subcomplex. Contacts the 5S rRNA and the P site tRNA. Forms a bridge to the 30S subunit in the 70S ribosome.

Functionally, this is one of the proteins that bind and probably mediate the attachment of the 5S RNA into the large ribosomal subunit, where it forms part of the central protuberance. In the 70S ribosome it contacts protein S13 of the 30S subunit (bridge B1b), connecting the two subunits; this bridge is implicated in subunit movement. Contacts the P site tRNA; the 5S rRNA and some of its associated proteins might help stabilize positioning of ribosome-bound tRNAs. The chain is Large ribosomal subunit protein uL5 (rplE) from Bacillus cereus.